The following is a 468-amino-acid chain: Probable ubiquitin carboxyl-terminal hydrolase R319 (468 aa).

Positions 42–462 constitute a USP domain; the sequence is TGIMNLGNTC…NAYILFYIRS (421 aa). Cysteine 51 (nucleophile) is an active-site residue. Catalysis depends on histidine 420, which acts as the Proton acceptor.

Belongs to the peptidase C19 family.

It catalyses the reaction Thiol-dependent hydrolysis of ester, thioester, amide, peptide and isopeptide bonds formed by the C-terminal Gly of ubiquitin (a 76-residue protein attached to proteins as an intracellular targeting signal).. This is Probable ubiquitin carboxyl-terminal hydrolase R319 from Acanthamoeba polyphaga (Amoeba).